We begin with the raw amino-acid sequence, 1014 residues long: Collagen alpha-1(I) chain (1014 aa).

Positions 1–1014 (SYGYDEKGGI…PGPPGPPGPP (1014 aa)) are disordered. Positions 9–22 (GISVPGPMGPSGPR) are enriched in low complexity. Residues Pro25, Pro28, Pro30, Pro39, Pro42, Pro45, Pro60, Pro75, Pro81, Pro90, and Pro96 each carry the 4-hydroxyproline modification. Positions 33–51 (QGFQGPPGEPGEPGSSGPM) are enriched in low complexity. Basic and acidic residues predominate over residues 63–77 (NGDDGEAGKPGRPGE). A 5-hydroxylysine; alternate modification is found at Lys99. O-linked (Gal...) hydroxylysine; alternate glycosylation occurs at Lys99. Ser105 carries the post-translational modification Phosphoserine. Residues 113–129 (DAGPAGPKGEPGSPGEN) show a composition bias toward low complexity. Residues Pro123, Pro126, Pro132, Pro141, Pro147, Pro168, Pro177, Pro180, Pro207, Pro210, Pro222, Pro228, Pro237, Pro243, Pro246, and Pro261 each carry the 4-hydroxyproline modification. The span at 147 to 165 (PGASGPAGARGNDGATGAA) shows a compositional bias: low complexity. Over residues 167–179 (PPGPTGPAGPPGF) the composition is skewed to pro residues. Over residues 213-252 (AGAAGPAGNPGADGQPGAKGANGAPGIAGAPGFPGARGPS) the composition is skewed to low complexity. Lys264 carries the post-translational modification 5-hydroxylysine. A 4-hydroxyproline mark is found at Pro270, Pro273, Pro285, Pro294, Pro309, Pro315, Pro324, and Pro330. The segment covering 319–328 (GERGGPGSRG) has biased composition (gly residues). Lys339 bears the 5-hydroxylysine mark. 4-hydroxyproline occurs at positions 348, 357, 363, 369, 378, 381, 390, 399, 405, 417, 426, 435, 438, 456, 473, 479, 485, 491, 497, 503, 515, 524, 535, 548, 554, and 563. The segment covering 372 to 398 (KGLTGSPGSPGPDGKTGPPGPAGQDGR) has biased composition (low complexity). Over residues 407–426 (ARGQAGVMGFPGPKGAAGEP) the composition is skewed to low complexity. The span at 485-494 (PGEAGKPGEQ) shows a compositional bias: low complexity. Lys575 is subject to 5-hydroxylysine. 3 positions are modified to 4-hydroxyproline: Pro581, Pro596, and Pro602. Low complexity predominate over residues 608-622 (SGPSGPAGPTGARGA). Ser611 bears the Phosphoserine mark. Residues Pro623, Pro629, Pro632, Pro641, Pro647, Pro674, and Pro683 each carry the 4-hydroxyproline modification. Residues 635–665 (AGFAGPPGADGQPGAKGEPGDAGAKGDAGPS) are compositionally biased toward low complexity. Lys686 is subject to 5-hydroxylysine. Low complexity predominate over residues 691-707 (SAGPPGATGFPGAAGRV). 4-hydroxyproline is present on residues Pro695 and Pro701. Residue Pro709 is modified to 3-hydroxyproline. 4-hydroxyproline is present on residues Pro710, Pro719, Pro722, Pro743, Pro752, Pro760, Pro769, Pro787, Pro796, Pro799, Pro805, Pro820, Pro826, Pro832, Pro841, and Pro847. The segment covering 736–745 (ETGPAGRPGE) has biased composition (low complexity). Residues 757–769 (KGSPGADGPAGAP) show a composition bias toward low complexity. The segment covering 819 to 829 (PPGPVGPPGLA) has biased composition (pro residues). Lys856 is modified (5-hydroxylysine). Residues 864 to 879 (PGPPGAPGAPGAPGPV) show a composition bias toward pro residues. 4-hydroxyproline occurs at positions 867, 870, and 873. Over residues 900–914 (AGPAGARGPAGPQGP) the composition is skewed to low complexity. Over residues 915 to 929 (RGDKGETGEQGDRGI) the composition is skewed to basic and acidic residues. Lys918 carries the 5-hydroxylysine modification. A 5-hydroxylysine; alternate modification is found at Lys930. An O-linked (Gal...) hydroxylysine; alternate glycan is attached at Lys930. Residues Pro945, Pro948, Pro966, and Pro981 each carry the 4-hydroxyproline modification. Residues 948-981 (PGEQGPSGASGPAGPRGPPGSAGSPGKDGLNGLP) show a composition bias toward low complexity. At Pro986 the chain carries 3-hydroxyproline. Pro987 is modified (4-hydroxyproline). The span at 999 to 1014 (VGPPGPPGPPGPPGPP) shows a compositional bias: pro residues. Pro1001 is modified (3-hydroxyproline). Pro1002 is modified (4-hydroxyproline). Pro1004 carries the post-translational modification 3-hydroxyproline. Position 1005 is a 4-hydroxyproline (Pro1005). Residue Pro1007 is modified to 3-hydroxyproline. Residues Pro1008, Pro1011, and Pro1014 each carry the 4-hydroxyproline modification.

The protein belongs to the fibrillar collagen family. Trimers of one alpha 2(I) and two alpha 1(I) chains. Contains mostly 4-hydroxyproline. Proline residues at the third position of the tripeptide repeating unit (G-X-Y) are hydroxylated in some or all of the chains. In terms of processing, contains 3-hydroxyproline at a few sites. This modification occurs on the first proline residue in the sequence motif Gly-Pro-Hyp, where Hyp is 4-hydroxyproline. Post-translationally, lysine residues at the third position of the tripeptide repeating unit (G-X-Y) are 5-hydroxylated in some or all of the chains. O-glycosylated on hydroxylated lysine residues. The O-linked glycan consists of a Glc-Gal disaccharide. In terms of tissue distribution, expressed in bones.

It localises to the secreted. The protein localises to the extracellular space. The protein resides in the extracellular matrix. Functionally, type I collagen is a member of group I collagen (fibrillar forming collagen). The polypeptide is Collagen alpha-1(I) chain (Megatherium americanum (Giant ground sloth)).